Reading from the N-terminus, the 187-residue chain is Adenine phosphoribosyltransferase (187 aa).

The protein belongs to the purine/pyrimidine phosphoribosyltransferase family. Homodimer.

It is found in the cytoplasm. The catalysed reaction is AMP + diphosphate = 5-phospho-alpha-D-ribose 1-diphosphate + adenine. It functions in the pathway purine metabolism; AMP biosynthesis via salvage pathway; AMP from adenine: step 1/1. Catalyzes a salvage reaction resulting in the formation of AMP, that is energically less costly than de novo synthesis. This Burkholderia pseudomallei (strain 1106a) protein is Adenine phosphoribosyltransferase.